An 864-amino-acid chain; its full sequence is Bifunctional uridylyltransferase/uridylyl-removing enzyme (864 aa).

Positions 1 to 328 (MLFPYFPLSE…QTNEPVQVRL (328 aa)) are uridylyltransferase. The tract at residues 329–686 (LDKEFQCVNN…ISNRFSEGGT (358 aa)) is uridylyl-removing. The 117-residue stretch at 446 to 562 (VDEHIVRTLL…LHFAEAVQNN (117 aa)) folds into the HD domain. 2 consecutive ACT domains span residues 687–766 (EIFV…TFRA) and 793–864 (EMEL…LEPK).

The protein belongs to the GlnD family. It depends on Mg(2+) as a cofactor.

The enzyme catalyses [protein-PII]-L-tyrosine + UTP = [protein-PII]-uridylyl-L-tyrosine + diphosphate. The catalysed reaction is [protein-PII]-uridylyl-L-tyrosine + H2O = [protein-PII]-L-tyrosine + UMP + H(+). Its activity is regulated as follows. Uridylyltransferase (UTase) activity is inhibited by glutamine, while glutamine activates uridylyl-removing (UR) activity. In terms of biological role, modifies, by uridylylation and deuridylylation, the PII regulatory proteins (GlnB and homologs), in response to the nitrogen status of the cell that GlnD senses through the glutamine level. Under low glutamine levels, catalyzes the conversion of the PII proteins and UTP to PII-UMP and PPi, while under higher glutamine levels, GlnD hydrolyzes PII-UMP to PII and UMP (deuridylylation). Thus, controls uridylylation state and activity of the PII proteins, and plays an important role in the regulation of nitrogen assimilation and metabolism. The sequence is that of Bifunctional uridylyltransferase/uridylyl-removing enzyme from Pasteurella multocida (strain Pm70).